We begin with the raw amino-acid sequence, 364 residues long: MITAEKKKKNKFLPNFDKQSIYSLRFDEMQNWLVEQGQQKFRAKQIFEWLYQKRVDSIDEMTNLSKDLRQLLKDNFTVTTLTTVVKQESKDGTIKFLFELQDGYTIETVLMRHDYGNSVCVTTQVGCRIGCTFCASTLGGLKRNLEAGEIVSQVLTVQKALDATEERVSQIVIMGIGEPFENYDEMMGFLRIVNDDNSLNIGARHITVSTSGIIPRIYDFADEDIQINFAVSLHAAKDEVRSRLMPINRAYNVEKLIEAIQYYQEKTNRRVTFEYGLFGGVNDQLEHARELAHLIKGLNCHVNLIPVNHVPERNYVKTAKNDIFKFEKELKRLGINATIRREQGSDIDAACGQLRAKERQVETR.

The active-site Proton acceptor is glutamate 107. Residues 113 to 346 (HDYGNSVCVT…ATIRREQGSD (234 aa)) form the Radical SAM core domain. Cysteine 120 and cysteine 351 are joined by a disulfide. Positions 127, 131, and 134 each coordinate [4Fe-4S] cluster. Residues 177 to 178 (GE), serine 209, 232 to 234 (SLH), and asparagine 308 each bind S-adenosyl-L-methionine. Catalysis depends on cysteine 351, which acts as the S-methylcysteine intermediate.

This sequence belongs to the radical SAM superfamily. RlmN family. Requires [4Fe-4S] cluster as cofactor.

The protein localises to the cytoplasm. The enzyme catalyses adenosine(2503) in 23S rRNA + 2 reduced [2Fe-2S]-[ferredoxin] + 2 S-adenosyl-L-methionine = 2-methyladenosine(2503) in 23S rRNA + 5'-deoxyadenosine + L-methionine + 2 oxidized [2Fe-2S]-[ferredoxin] + S-adenosyl-L-homocysteine. The catalysed reaction is adenosine(37) in tRNA + 2 reduced [2Fe-2S]-[ferredoxin] + 2 S-adenosyl-L-methionine = 2-methyladenosine(37) in tRNA + 5'-deoxyadenosine + L-methionine + 2 oxidized [2Fe-2S]-[ferredoxin] + S-adenosyl-L-homocysteine. Its function is as follows. Specifically methylates position 2 of adenine 2503 in 23S rRNA and position 2 of adenine 37 in tRNAs. Confers resistance to some classes of antibiotics. In Staphylococcus aureus (strain bovine RF122 / ET3-1), this protein is Probable dual-specificity RNA methyltransferase RlmN.